We begin with the raw amino-acid sequence, 417 residues long: Serine hydroxymethyltransferase 2 (417 aa).

(6S)-5,6,7,8-tetrahydrofolate-binding positions include Leu121 and 125–127 (GHL). Lys230 is modified (N6-(pyridoxal phosphate)lysine). Residue 355–357 (SPF) participates in (6S)-5,6,7,8-tetrahydrofolate binding.

It belongs to the SHMT family. In terms of assembly, homodimer. The cofactor is pyridoxal 5'-phosphate.

It is found in the cytoplasm. The catalysed reaction is (6R)-5,10-methylene-5,6,7,8-tetrahydrofolate + glycine + H2O = (6S)-5,6,7,8-tetrahydrofolate + L-serine. Its pathway is one-carbon metabolism; tetrahydrofolate interconversion. It functions in the pathway amino-acid biosynthesis; glycine biosynthesis; glycine from L-serine: step 1/1. Its function is as follows. Catalyzes the reversible interconversion of serine and glycine with tetrahydrofolate (THF) serving as the one-carbon carrier. This reaction serves as the major source of one-carbon groups required for the biosynthesis of purines, thymidylate, methionine, and other important biomolecules. Also exhibits THF-independent aldolase activity toward beta-hydroxyamino acids, producing glycine and aldehydes, via a retro-aldol mechanism. This is Serine hydroxymethyltransferase 2 from Colwellia psychrerythraea (strain 34H / ATCC BAA-681) (Vibrio psychroerythus).